A 263-amino-acid chain; its full sequence is Ribosomal RNA large subunit methyltransferase E (263 aa).

A disordered region spans residues 1–34; it reads MSSAEGPKSGGGSKGSKSEASSRVRGSAPTGSRD. Residues G102, W104, D126, D142, and D166 each contribute to the S-adenosyl-L-methionine site. The Proton acceptor role is filled by K206.

The protein belongs to the class I-like SAM-binding methyltransferase superfamily. RNA methyltransferase RlmE family.

The protein resides in the cytoplasm. The catalysed reaction is uridine(2552) in 23S rRNA + S-adenosyl-L-methionine = 2'-O-methyluridine(2552) in 23S rRNA + S-adenosyl-L-homocysteine + H(+). In terms of biological role, specifically methylates the uridine in position 2552 of 23S rRNA at the 2'-O position of the ribose in the fully assembled 50S ribosomal subunit. This is Ribosomal RNA large subunit methyltransferase E from Rhodospirillum rubrum (strain ATCC 11170 / ATH 1.1.1 / DSM 467 / LMG 4362 / NCIMB 8255 / S1).